The primary structure comprises 90 residues: RNA-binding protein Hfq (90 aa).

Positions 9 to 69 constitute a Sm domain; that stretch reads DRFLNHLRVN…ISTIIPSSYV (61 aa).

This sequence belongs to the Hfq family. In terms of assembly, homohexamer.

Functionally, RNA chaperone that binds small regulatory RNA (sRNAs) and mRNAs to facilitate mRNA translational regulation in response to envelope stress, environmental stress and changes in metabolite concentrations. Also binds with high specificity to tRNAs. The protein is RNA-binding protein Hfq of Thermotoga sp. (strain RQ2).